Reading from the N-terminus, the 193-residue chain is Acyl-homoserine-lactone synthase (193 aa).

It belongs to the autoinducer synthase family.

The catalysed reaction is a fatty acyl-[ACP] + S-adenosyl-L-methionine = an N-acyl-L-homoserine lactone + S-methyl-5'-thioadenosine + holo-[ACP] + H(+). Required for the synthesis of N-(3-oxodecanoyl)-L-homoserine lactone (ODHL), an autoinducer molecule which binds to VanR. The protein is Acyl-homoserine-lactone synthase (vanI) of Vibrio anguillarum (Listonella anguillarum).